Consider the following 341-residue polypeptide: Adhesion protein Bd37 (341 aa).

A signal peptide spans 1 to 21 (MKTSKILNTAAICLLAMGFNG). N-linked (GlcNAc...) asparagine glycosylation is found at Asn23 and Asn30. An intrachain disulfide couples Cys26 to Cys307. The tract at residues 36–75 (AAANPVVSTPGNDAQQAGTQQGGANSKSVPEQQPQQAAGE) is disordered. A compositionally biased stretch (low complexity) spans 49–59 (AQQAGTQQGGA). Over residues 60-75 (NSKSVPEQQPQQAAGE) the composition is skewed to polar residues. Ser311 carries the GPI-anchor amidated serine lipid modification. The propeptide at 312 to 341 (GQGSSPKKPSFAAVPSSLSAIVFGIIVSMF) is removed in mature form.

The signal sequence is cleaved. Post-translationally, glycosylated. In terms of processing, palmitoylated. Not myristoylated.

Its subcellular location is the cell membrane. The protein localises to the secreted. It is found in the vesicle. Functionally, binds to host erythrocytes. This chain is Adhesion protein Bd37, found in Babesia divergens.